The primary structure comprises 158 residues: Methylated-DNA--protein-cysteine methyltransferase (158 aa).

Cys-126 serves as the catalytic Nucleophile; methyl group acceptor.

This sequence belongs to the MGMT family.

Its subcellular location is the cytoplasm. It carries out the reaction a 6-O-methyl-2'-deoxyguanosine in DNA + L-cysteinyl-[protein] = S-methyl-L-cysteinyl-[protein] + a 2'-deoxyguanosine in DNA. The enzyme catalyses a 4-O-methyl-thymidine in DNA + L-cysteinyl-[protein] = a thymidine in DNA + S-methyl-L-cysteinyl-[protein]. Functionally, involved in the cellular defense against the biological effects of O6-methylguanine (O6-MeG) and O4-methylthymine (O4-MeT) in DNA. Repairs the methylated nucleobase in DNA by stoichiometrically transferring the methyl group to a cysteine residue in the enzyme. This is a suicide reaction: the enzyme is irreversibly inactivated. This is Methylated-DNA--protein-cysteine methyltransferase from Methanosarcina mazei (strain ATCC BAA-159 / DSM 3647 / Goe1 / Go1 / JCM 11833 / OCM 88) (Methanosarcina frisia).